The primary structure comprises 117 residues: Large ribosomal subunit protein bL20 (117 aa).

It belongs to the bacterial ribosomal protein bL20 family.

In terms of biological role, binds directly to 23S ribosomal RNA and is necessary for the in vitro assembly process of the 50S ribosomal subunit. It is not involved in the protein synthesizing functions of that subunit. This Rickettsia prowazekii (strain Madrid E) protein is Large ribosomal subunit protein bL20 (rplT).